The following is a 455-amino-acid chain: Proline--tRNA ligase (455 aa).

The L-proline site is built by Thr-101, Glu-103, and Arg-132. Residues Arg-132, Glu-134, Gln-216, and Thr-219 each coordinate ATP. His-221 contacts L-proline. ATP-binding residues include Ser-253 and Arg-255. The tract at residues 329 to 359 (EIKGVPLRIEVGPKDIENKKITLFRRDTMEK) is interaction with tRNA.

It belongs to the class-II aminoacyl-tRNA synthetase family. ProS type 3 subfamily. Homodimer. The dimer is functionally asymmetric: only one of the two active sites at a time is able to form prolyl-adenylate, and only one tRNA molecule binds per dimer.

Its subcellular location is the cytoplasm. It catalyses the reaction tRNA(Pro) + L-proline + ATP = L-prolyl-tRNA(Pro) + AMP + diphosphate. Inhibited by high concentrations of prolinamide. Its function is as follows. Catalyzes the attachment of proline to tRNA(Pro) in a two-step reaction: proline is first activated by ATP to form Pro-AMP and then transferred to the acceptor end of tRNA(Pro). Can inadvertently accommodate and process non-cognate amino acids such as cysteine and alanine. In Methanocaldococcus jannaschii (strain ATCC 43067 / DSM 2661 / JAL-1 / JCM 10045 / NBRC 100440) (Methanococcus jannaschii), this protein is Proline--tRNA ligase (proS).